A 225-amino-acid chain; its full sequence is Zinc finger protein 22 (225 aa).

The segment at 1-35 (MRLGKPKGGISRSSSQGKVYENQRKTGRQRQRWGM) is disordered. Position 18 is an N6-acetyllysine (K18). 5 C2H2-type zinc fingers span residues 55 to 77 (YKCVECEKSFSQSSTLFQHQKIH), 83 to 105 (HKCADCGKSFFQSSNLIQHRRVH), 111 to 133 (YRCDECGERFKQSSNLIQHQRIH), 139 to 161 (YQCDECGRCFSQSSHLIQHQRTH), and 167 to 189 (YQCSECGKCFSQSSHLRQHTKVH). Residues 183–225 (RQHTKVHEEEKPRKTRGRSLRAKTHSLSSWKAGKGRRSAAGLR) form a disordered region. Basic residues predominate over residues 195-206 (RKTRGRSLRAKT).

It belongs to the krueppel C2H2-type zinc-finger protein family.

Its subcellular location is the nucleus. Its function is as follows. Binds DNA through the consensus sequence 5'-CAATG-3'. May be involved in transcriptional regulation and may play a role in tooth formation. The sequence is that of Zinc finger protein 22 (ZNF22) from Bos taurus (Bovine).